The chain runs to 418 residues: Magnesium-chelatase subunit ChlI-2, chloroplastic (418 aa).

Residues 1–55 (MASLLGRSPSSILTCPRISSPSSTSSMSHLCFGPEKLSGRIQFNPKKNRSRYHVS) constitute a chloroplast transit peptide. V56 carries the N-acetylvaline modification. 2 disulfides stabilise this stretch: C96-C187 and C348-C390. 113–120 (GDRGTGKS) lines the ATP pocket.

Belongs to the Mg-chelatase subunits D/I family. As to quaternary structure, the magnesium chelatase complex is a heterotrimer consisting of subunits CHLI, CHLD and CHLH. Expressed in leaves.

The protein resides in the plastid. It localises to the chloroplast. The catalysed reaction is protoporphyrin IX + Mg(2+) + ATP + H2O = Mg-protoporphyrin IX + ADP + phosphate + 3 H(+). Its pathway is porphyrin-containing compound metabolism; chlorophyll biosynthesis. Redox regulation; active in reducing conditions, inactive in oxidizing conditions. Thioredoxins f and m mediate the reversible reductive activation of oxidized CHLI2. Functionally, involved in chlorophyll biosynthesis. Catalyzes the insertion of magnesium ion into protoporphyrin IX to yield Mg-protoporphyrin IX. The reaction takes place in two steps, with an ATP-dependent activation followed by an ATP-dependent chelation step. Possesses low affinity for ATP and may play a limited role in chlorophyll biosynthesis, and contributes to the assembly of the Mg-chelatase complex. The polypeptide is Magnesium-chelatase subunit ChlI-2, chloroplastic (CHLI2) (Arabidopsis thaliana (Mouse-ear cress)).